A 581-amino-acid chain; its full sequence is Transcription activator GAGA (581 aa).

Residues 34–99 (VDCTLAAGGR…VYRGEVSVDH (66 aa)) form the BTB domain. The segment at 201-397 (VIQAFLPARK…SSGSGSGALS (197 aa)) is interaction with E(bx). Residue Thr-237 is modified to Phosphothreonine. Disordered regions lie at residues 298 to 343 (ITPA…EQPA) and 364 to 404 (LRHF…SVPQ). The C2H2-type; degenerate zinc finger occupies 343 to 366 (ATCPICYAVIRQSRNLRRHLELRH). Positions 381-401 (GKKSSSGSSGSGSGALSSSGS) are enriched in low complexity.

Interacts with Bin1, lolal, corto, ttk and ph-p. Interacts with FACT subunits Ssrp and dre4/SPT16. Interacts with E(bx). Upon ecdysone stimulation, interacts with Nup98. In terms of processing, the N-terminus is blocked. In terms of tissue distribution, expressed in the central nervous system throughout development.

The protein resides in the nucleus. It localises to the chromosome. Transcriptional activator that functions by regulating chromatin structure. Overcomes the repressive effects of chromatin by promoting the open chromatin conformation in promoter gene regions, thereby allowing access to other transcription factors. Binds to DNA Polycomb response elements (PREs) at the bithorax complex and to the proximal region of the engrailed promoter, and positively regulates transcription of many genes including homeotic ones. Involved in zygotic genome activation (ZGA), a critical event in early embryonic development during which the developmental control passes from maternally provided mRNAs to the expression of the zygotic genome after fertilization. Binds to the DNA sequence (GA)n, with optimal binding to the pentamer 5'-GAGAG-3'. Binds DNA as an oligomer. May also act as a transcriptional repressor, maintaining the repressed state of genes including lolal, and down-regulating its own transcription. Required for dosage compensation in males and may be involved in oogenesis. Also has a role in nuclear division. The sequence is that of Transcription activator GAGA (Trl) from Drosophila melanogaster (Fruit fly).